A 178-amino-acid polypeptide reads, in one-letter code: Matrix-remodeling-associated protein 7 (178 aa).

The chain crosses the membrane as a helical span at residues 7–27 (LLAALPALVTALALLLAWLLL). The disordered stretch occupies residues 33-121 (RVPAPESTAS…AFSFKYSPGQ (89 aa)). Pro residues predominate over residues 48-65 (APAPPEPPESCAPEPAPE). Residues 76-85 (PEESEAEEPA) are compositionally biased toward acidic residues. Phosphoserine is present on residues Ser79 and Ser165.

It is found in the membrane. This is Matrix-remodeling-associated protein 7 (Mxra7) from Mus musculus (Mouse).